Here is a 494-residue protein sequence, read N- to C-terminus: MKGFLSLTLLPLLVAASPVAVNSIHNDAAPILSSMTSKDIPDSYIVVFKKHVDPSSASAHQSWLQEVHTAHTGRMELKKRSLFGFDFEAFMGLKHTFHIAGSLLGYAGHFHEDVIEQIRRHPDVDYIEKDSEVRTMSEGSVEKNAPWGLARISHRESLSFGNFNKYLYAEEGGEGVDAYVIDTGANVKHVDFEGRANWGKTIPQGDADEDGNGHGTHCSGTIAGKKFGVAKKANVYAVKVLRSNGSGTMSDVVKGVEWAAEAHIKKSKKGDKKFKGSVANMSLGGGSSRTLDLAVNAAVDAGIHFAVAAGNDNADACNYSPAAAEKAITVGASTLADERAYFSNYGKCTDIFAPGLNILSTWVGSDHATNTISGTSMASPHIAGLLAYYVSLAPAKDSAYAVADVTPKQLKAALISVATEGTLTDIPSDTPNLLAWNGGGSANYTKILADGGYKAHNAETTVEDRIGIIIDSAEKAFHKELGAIYSEIKDAVSV.

The signal sequence occupies residues methionine 1–alanine 16. Residues serine 17 to methionine 136 constitute a propeptide, removed in mature form. An Inhibitor I9 domain is found at serine 43 to methionine 136. Residues proline 146–leucine 448 enclose the Peptidase S8 domain. 2 igE-binding regions span residues valine 180–tryptophan 198 and glutamate 209–lysine 231. Active-site charge relay system residues include aspartate 182 and histidine 214. Residues asparagine 244 and asparagine 280 are each glycosylated (N-linked (GlcNAc...) asparagine). The active-site Charge relay system is the serine 376. Asparagine 443 is a glycosylation site (N-linked (GlcNAc...) asparagine). Positions lysine 454–valine 494 are cleaved as a propeptide — removed in mature form.

The protein belongs to the peptidase S8 family.

In terms of biological role, serine protease. In Penicillium rubens, this protein is Subtilisin-like serine protease Pen ch 18.0101.